Reading from the N-terminus, the 517-residue chain is Maturase K (517 aa).

This sequence belongs to the intron maturase 2 family. MatK subfamily.

It localises to the plastid. Its subcellular location is the chloroplast. Its function is as follows. Usually encoded in the trnK tRNA gene intron. Probably assists in splicing its own and other chloroplast group II introns. This chain is Maturase K, found in Paris tetraphylla.